A 258-amino-acid chain; its full sequence is Thymidylate synthase (258 aa).

Arg21 serves as a coordination point for dUMP. Position 51 (His51) interacts with (6R)-5,10-methylene-5,6,7,8-tetrahydrofolate. Position 121 to 122 (121 to 122) interacts with dUMP; sequence RR. The active-site Nucleophile is Cys141. DUMP-binding positions include 161–164, Asn172, and 202–204; these read RSAD and HLY. Residue Asp164 participates in (6R)-5,10-methylene-5,6,7,8-tetrahydrofolate binding. Residue Ala257 participates in (6R)-5,10-methylene-5,6,7,8-tetrahydrofolate binding.

Belongs to the thymidylate synthase family. Bacterial-type ThyA subfamily. In terms of assembly, homodimer.

The protein localises to the cytoplasm. It catalyses the reaction dUMP + (6R)-5,10-methylene-5,6,7,8-tetrahydrofolate = 7,8-dihydrofolate + dTMP. Its pathway is pyrimidine metabolism; dTTP biosynthesis. In terms of biological role, catalyzes the reductive methylation of 2'-deoxyuridine-5'-monophosphate (dUMP) to 2'-deoxythymidine-5'-monophosphate (dTMP) while utilizing 5,10-methylenetetrahydrofolate (mTHF) as the methyl donor and reductant in the reaction, yielding dihydrofolate (DHF) as a by-product. This enzymatic reaction provides an intracellular de novo source of dTMP, an essential precursor for DNA biosynthesis. This is Thymidylate synthase from Dichelobacter nodosus (strain VCS1703A).